The sequence spans 298 residues: Cholesterol 25-hydroxylase (298 aa).

An N-linked (GlcNAc...) asparagine glycan is attached at Asn5. A run of 3 helical transmembrane segments spans residues 38–58, 88–108, and 124–144; these read IFPV…FVVL, LGLT…LHWV, and LLSH…AWHL. A Fatty acid hydroxylase domain is found at 128–263; the sequence is VLICLLLFDT…FTHWDKMLGT (136 aa). Positions 142–146 match the Histidine box-1 motif; sequence WHLLH. The Histidine box-2 motif lies at 157–161; it reads HKVHH. N-linked (GlcNAc...) asparagine glycosylation is present at Asn163. The Histidine box-3 motif lies at 238–244; it reads HHDMHHS.

It belongs to the sterol desaturase family. Requires Fe cation as cofactor. Post-translationally, N-glycosylated. As to expression, widely expressed at low level and at higher level in the lung. Weakly expressed in the heart, lung and kidney.

It is found in the endoplasmic reticulum membrane. The enzyme catalyses cholesterol + AH2 + O2 = 25-hydroxycholesterol + A + H2O. It carries out the reaction cholesterol + NADPH + O2 + H(+) = 25-hydroxycholesterol + NADP(+) + H2O. Catalyzes the formation of 25-hydroxycholesterol from cholesterol, leading to repress cholesterol biosynthetic enzymes. Plays a key role in cell positioning and movement in lymphoid tissues: 25-hydroxycholesterol is an intermediate in biosynthesis of 7-alpha,25-dihydroxycholesterol (7-alpha,25-OHC), an oxysterol that acts as a ligand for the G protein-coupled receptor GPR183/EBI2, a chemotactic receptor for a number of lymphoid cells. May play an important role in regulating lipid metabolism by synthesizing a corepressor that blocks sterol regulatory element binding protein (SREBP) processing. In testis, production of 25-hydroxycholesterol by macrophages may play a role in Leydig cell differentiation. Required to restrain inflammation in macrophages: production of 25-hydroxycholesterol protects macrophages from cholesterol overload, thereby preventing mitochondrial DNA release and subsequent activation of the AIM2 inflammasome. Interferon-stimulated gene which has broad antiviral activities against a wide range of enveloped viruses. In Mus musculus (Mouse), this protein is Cholesterol 25-hydroxylase.